The sequence spans 445 residues: MTELRQRVAREPEAPPEDKESESEAKADGETASDSESRVEAVTQPPSADDTPEVLNRALSNLSSRWKNWWVRGILTLAMIAFFFIIIYLGPMVLMMIVMCVQIKCFHEIITIGYNVYHSYDLPWFRTLSWYFLLCVNYFFYGETVTDYFFTLVQREEPLRILSKYHRFISFTLYLTGFCMFVLSLVKKHYRLQFYMFGWTHVTLLIVVTQSHLVIHNLFEGMIWFIVPISCVICNDIMAYMFGFFFGRTPLIKLSPKKTWEGFIGGFFATVVFGLLLSYVMSGYRCFVCPVEYNNDTNSFTVDCEPSGLFRLQEYNIPGVIQSIIGWKTVRMYPFQIHSIALSTFASLIGPFGGFFASGFKRAFKIKDFANTIPGHGGIMDRFDCQYLMATFVNVYIASFIRGPNPSKLVQQFLTLRPDQQLHIFNTLKSHLTDKGMLTAATEDK.

A compositionally biased stretch (basic and acidic residues) spans 1–39 (MTELRQRVAREPEAPPEDKESESEAKADGETASDSESRV). Residues 1 to 52 (MTELRQRVAREPEAPPEDKESESEAKADGETASDSESRVEAVTQPPSADDTP) are disordered. Ser21 bears the Phosphoserine mark. Thr31 is subject to Phosphothreonine. A phosphoserine mark is found at Ser33, Ser35, and Ser37. Phosphothreonine is present on Thr51. 6 consecutive transmembrane segments (helical) span residues 79–99 (MIAF…MIVM), 132–152 (FLLC…FFTL), 166–186 (HRFI…LSLV), 213–233 (LVIH…SCVI), 262–282 (GFIG…YVMS), and 340–360 (IALS…ASGF).

This sequence belongs to the CDS family. In terms of assembly, homodimer.

It localises to the endoplasmic reticulum membrane. It catalyses the reaction a 1,2-diacyl-sn-glycero-3-phosphate + CTP + H(+) = a CDP-1,2-diacyl-sn-glycerol + diphosphate. The catalysed reaction is 1-octadecanoyl-2-(5Z,8Z,11Z,14Z-eicosatetraenoyl)-sn-glycero-3-phosphate + CTP + H(+) = 1-octadecanoyl-2-(5Z,8Z,11Z,14Z-eicosatetraenoyl)-sn-glycero-3-cytidine-5'-diphosphate + diphosphate. The enzyme catalyses 1-octadecanoyl-2-(9Z,12Z-octadecadienoyl)-sn-glycero-3-phosphate + CTP + H(+) = 1-octadecanoyl-2-(9Z,12Z-octadecadienoyl)-sn-glycero-3-cytidine-5'-diphosphate + diphosphate. It carries out the reaction 1-hexadecanoyl-2-(5Z,8Z,11Z,14Z-eicosatetraenoyl)-sn-glycero-3-phosphate + CTP + H(+) = 1-hexadecanoyl-2-(5Z,8Z,11Z,14Z-eicosatetraenoyl)-sn-glycero-3-cytidine-5'-diphosphate + diphosphate. It catalyses the reaction 1,2-di-(5Z,8Z,11Z,14Z)-eicosatetraenoyl-sn-glycero-3-phosphate + CTP + H(+) = 1,2-di-(5Z,8Z,11Z,14Z-eicosatetraenoyl)-sn-glycero-3-cytidine-5'-diphosphate + diphosphate. The catalysed reaction is 1-octadecanoyl-2-(9Z-octadecenoyl)-sn-glycero-3-phosphate + CTP + H(+) = 1-octadecanoyl-2-(9Z-octadecenoyl)-sn-glycero-3-cytidine-5'-diphosphate + diphosphate. The enzyme catalyses 1-octadecanoyl-2-(4Z,7Z,10Z,13Z,16Z,19Z-docosahexaenoyl)-sn-glycero-3-phosphate + CTP + H(+) = 1-octadecanoyl-2-(4Z,7Z,10Z,13Z,16Z,19Z-docosahexaenoyl)-sn-glycero-3-cytidine-5'-diphosphate + diphosphate. It carries out the reaction 1,2-di-(9Z,12Z-octadecadienoyl)-sn-glycero-3-phosphate + CTP + H(+) = 1,2-di-(9Z,12Z-octadecadienoyl)-sn-glycero-3-cytidine-5'-diphosphate + diphosphate. It catalyses the reaction 1,2-di-(9Z-octadecenoyl)-sn-glycero-3-phosphate + CTP + H(+) = 1,2-di-(9Z-octadecenoyl)-sn-glycero-3-cytidine-5'-diphosphate + diphosphate. It functions in the pathway phospholipid metabolism; CDP-diacylglycerol biosynthesis; CDP-diacylglycerol from sn-glycerol 3-phosphate: step 3/3. Catalyzes the conversion of phosphatidic acid (PA) to CDP-diacylglycerol (CDP-DAG), an essential intermediate in the synthesis of phosphatidylglycerol, cardiolipin and phosphatidylinositol. Exhibits specificity for the nature of the acyl chains at the sn-1 and sn-2 positions in the substrate, PA and the preferred acyl chain composition is 1-stearoyl-2-arachidonoyl-sn-phosphatidic acid. Plays an important role in regulating the growth and maturation of lipid droplets which are storage organelles at the center of lipid and energy homeostasis. This Bos taurus (Bovine) protein is Phosphatidate cytidylyltransferase 2 (CDS2).